A 140-amino-acid polypeptide reads, in one-letter code: MFLKTESFEHNGVTVTLSELSALQRIEHLALMKRQAEQAESDSNRKFTVEDAIRTGAFLVAMSLWHNHPQKTQMPSMNEAVKQIEQEVLTTWPTEAISHAENVVYRLSGMYEFVVNNAPEQTEDAGPAEPVSAGKCSTVS.

The disordered stretch occupies residues Gln-121 to Ser-140.

The protein belongs to the lambda-like tail assembly protein family. As to quaternary structure, interacts with the tail assembly protein GT and the tape measure protein.

Its subcellular location is the host cytoplasm. Its function is as follows. Promotes tail assembly by creating a scaffold for the tail tube proteins. Tail assembly proteins G and GT probably wrap the linear tape measure protein to create a tail assembly scaffold. This allows the polymerization of the tail tube protein, during which G and GT are released, therefore they are absent in the mature virion. The tail assembly protein GT is produced by a rare -1 ribosomal frameshift. The ratio of translated G/GT is about 20, and this ratio is important for proper tail assembly. The protein is Tail assembly protein G (G) of Escherichia phage lambda (Bacteriophage lambda).